The primary structure comprises 145 residues: Protein SPMIP3 (145 aa).

This chain is Protein SPMIP3, found in Mus musculus (Mouse).